The primary structure comprises 310 residues: tRNA-cytidine(32) 2-sulfurtransferase (310 aa).

Positions 45–50 (SGGKDS) match the PP-loop motif motif. [4Fe-4S] cluster is bound by residues Cys120, Cys123, and Cys211.

Belongs to the TtcA family. As to quaternary structure, homodimer. Mg(2+) is required as a cofactor. [4Fe-4S] cluster serves as cofactor.

The protein localises to the cytoplasm. It catalyses the reaction cytidine(32) in tRNA + S-sulfanyl-L-cysteinyl-[cysteine desulfurase] + AH2 + ATP = 2-thiocytidine(32) in tRNA + L-cysteinyl-[cysteine desulfurase] + A + AMP + diphosphate + H(+). The protein operates within tRNA modification. Its function is as follows. Catalyzes the ATP-dependent 2-thiolation of cytidine in position 32 of tRNA, to form 2-thiocytidine (s(2)C32). The sulfur atoms are provided by the cysteine/cysteine desulfurase (IscS) system. The sequence is that of tRNA-cytidine(32) 2-sulfurtransferase from Shewanella baltica (strain OS185).